The primary structure comprises 101 residues: Small ribosomal subunit protein uS14 (101 aa).

This sequence belongs to the universal ribosomal protein uS14 family. In terms of assembly, part of the 30S ribosomal subunit. Contacts proteins S3 and S10.

Its function is as follows. Binds 16S rRNA, required for the assembly of 30S particles and may also be responsible for determining the conformation of the 16S rRNA at the A site. The protein is Small ribosomal subunit protein uS14 of Brucella abortus (strain 2308).